Consider the following 351-residue polypeptide: Serine protease inhibitor dipetalogastin (351 aa).

A propeptide spanning residues 1–131 (LIKELVNMVI…AETTNAMEVL (131 aa)) is cleaved from the precursor. Kazal-like domains lie at 19–69 (KELK…PCDE), 72–122 (HDFE…ECHA), 131–181 (LFQG…PCDE), 184–234 (HDFE…ECHP), 240–289 (QLIL…ECKV), and 297–347 (GEVR…RCLP). 18 disulfide bridges follow: Cys25–Cys50, Cys27–Cys46, Cys35–Cys67, Cys78–Cys103, Cys80–Cys99, Cys88–Cys120, Cys137–Cys162, Cys139–Cys158, Cys147–Cys179, Cys190–Cys215, Cys192–Cys211, Cys200–Cys232, Cys246–Cys271, Cys248–Cys267, Cys256–Cys287, Cys303–Cys328, Cys305–Cys324, and Cys313–Cys345.

Its subcellular location is the secreted. In terms of biological role, thrombin inhibitor. Prevents blood clotting to allow insect to feed on blood. Also functions as an inhibitor of trypsin and plasmin. This is Serine protease inhibitor dipetalogastin from Dipetalogaster maximus (Blood-sucking bug).